The sequence spans 333 residues: Holliday junction branch migration complex subunit RuvB (333 aa).

Residues 1–182 form a large ATPase domain (RuvB-L) region; sequence MDERLLSGES…FGVLSRLEYY (182 aa). Residues Leu21, Arg22, Gly63, Lys66, Thr67, Thr68, 129-131, Arg172, Tyr182, and Arg219 each bind ATP; that span reads EDF. Residue Thr67 coordinates Mg(2+). Residues 183–253 are small ATPAse domain (RuvB-S); it reads TVDQLSAIVE…ITQMALELLQ (71 aa). The interval 256-333 is head domain (RuvB-H); it reads KLGLDHIDHK…EHFGMEMPKV (78 aa). DNA is bound by residues Arg311 and Arg316.

This sequence belongs to the RuvB family. In terms of assembly, homohexamer. Forms an RuvA(8)-RuvB(12)-Holliday junction (HJ) complex. HJ DNA is sandwiched between 2 RuvA tetramers; dsDNA enters through RuvA and exits via RuvB. An RuvB hexamer assembles on each DNA strand where it exits the tetramer. Each RuvB hexamer is contacted by two RuvA subunits (via domain III) on 2 adjacent RuvB subunits; this complex drives branch migration. In the full resolvosome a probable DNA-RuvA(4)-RuvB(12)-RuvC(2) complex forms which resolves the HJ.

It is found in the cytoplasm. It catalyses the reaction ATP + H2O = ADP + phosphate + H(+). Its function is as follows. The RuvA-RuvB-RuvC complex processes Holliday junction (HJ) DNA during genetic recombination and DNA repair, while the RuvA-RuvB complex plays an important role in the rescue of blocked DNA replication forks via replication fork reversal (RFR). RuvA specifically binds to HJ cruciform DNA, conferring on it an open structure. The RuvB hexamer acts as an ATP-dependent pump, pulling dsDNA into and through the RuvAB complex. RuvB forms 2 homohexamers on either side of HJ DNA bound by 1 or 2 RuvA tetramers; 4 subunits per hexamer contact DNA at a time. Coordinated motions by a converter formed by DNA-disengaged RuvB subunits stimulates ATP hydrolysis and nucleotide exchange. Immobilization of the converter enables RuvB to convert the ATP-contained energy into a lever motion, pulling 2 nucleotides of DNA out of the RuvA tetramer per ATP hydrolyzed, thus driving DNA branch migration. The RuvB motors rotate together with the DNA substrate, which together with the progressing nucleotide cycle form the mechanistic basis for DNA recombination by continuous HJ branch migration. Branch migration allows RuvC to scan DNA until it finds its consensus sequence, where it cleaves and resolves cruciform DNA. This is Holliday junction branch migration complex subunit RuvB from Bacillus mycoides (strain KBAB4) (Bacillus weihenstephanensis).